The chain runs to 333 residues: Tetraacyldisaccharide 4'-kinase (333 aa).

Residue 55 to 62 (TAGGNGKT) participates in ATP binding.

Belongs to the LpxK family.

It carries out the reaction a lipid A disaccharide + ATP = a lipid IVA + ADP + H(+). The protein operates within glycolipid biosynthesis; lipid IV(A) biosynthesis; lipid IV(A) from (3R)-3-hydroxytetradecanoyl-[acyl-carrier-protein] and UDP-N-acetyl-alpha-D-glucosamine: step 6/6. In terms of biological role, transfers the gamma-phosphate of ATP to the 4'-position of a tetraacyldisaccharide 1-phosphate intermediate (termed DS-1-P) to form tetraacyldisaccharide 1,4'-bis-phosphate (lipid IVA). The protein is Tetraacyldisaccharide 4'-kinase of Pectobacterium atrosepticum (strain SCRI 1043 / ATCC BAA-672) (Erwinia carotovora subsp. atroseptica).